Here is a 1090-residue protein sequence, read N- to C-terminus: Protein CHROMATIN REMODELING 24 (1090 aa).

Disordered stretches follow at residues 1–51 (MAEN…MIKL) and 247–273 (VGKQNSYSGRHFDDNSEDNRQGYNLDR). The short motif at 44 to 51 (TKKSMIKL) is the Nuclear localization signal element. A compositionally biased stretch (basic and acidic residues) spans 256–273 (RHFDDNSEDNRQGYNLDR). A Helicase ATP-binding domain is found at 389–564 (WSLHTQGKGG…WALFNFSCPG (176 aa)). 402-409 (DDMGLGKT) contributes to the ATP binding site. Positions 515–518 (DEGH) match the DEAH box motif. The region spanning 736-895 (FIMSLLENLI…IRYFSQQDLR (160 aa)) is the Helicase C-terminal domain. Residues 1043 to 1069 (DGGAKIQKQIAELTRELKDMKAAERIN) are a coiled coil.

Belongs to the SNF2/RAD54 helicase family.

Its subcellular location is the nucleus. In terms of biological role, DNA helicase that acts as an essential component of the spindle assembly checkpoint. Probable chromatin remodeling factor that regulate homologous recombination (HR) and non-homologous recombination (NHR). The protein is Protein CHROMATIN REMODELING 24 of Arabidopsis thaliana (Mouse-ear cress).